A 96-amino-acid polypeptide reads, in one-letter code: Protein RnfH (96 aa).

This sequence belongs to the UPF0125 (RnfH) family.

The chain is Protein RnfH from Cronobacter sakazakii (strain ATCC BAA-894) (Enterobacter sakazakii).